A 505-amino-acid chain; its full sequence is Flagellin (505 aa).

The protein belongs to the bacterial flagellin family.

The protein resides in the secreted. Its subcellular location is the bacterial flagellum. Its function is as follows. Flagellin is the subunit protein which polymerizes to form the filaments of bacterial flagella. The protein is Flagellin (fliC) of Salmonella budapest.